The chain runs to 359 residues: Mineralocorticoid receptor (359 aa).

Positions Phe1–Ser49 form a DNA-binding region, nuclear receptor. Positions 13, 19, 29, and 32 each coordinate Zn(2+). The NR C4-type zinc finger occupies Cys13–Cys37. Residues Lys48–Val96 form a disordered region. Positions Lys50–Pro107 are hinge. Residues Tyr108–Ile339 enclose the NR LBD domain. 21-hydroxyprogesterone-binding residues include Asn145 and Gln151. Residues Asn145 and Gln151 each coordinate aldosterone. Progesterone contacts are provided by Asn145 and Gln151. The segment at Lys157 to Lys160 is important for coactivator binding. Positions 192 and 320 each coordinate 21-hydroxyprogesterone. Aldosterone-binding residues include Arg192 and Thr320. 2 residues coordinate progesterone: Arg192 and Thr320.

The protein belongs to the nuclear hormone receptor family. NR3 subfamily.

Its subcellular location is the cytoplasm. It localises to the nucleus. In terms of biological role, receptor for both mineralocorticoids (MC) such as cortisol. Binds to mineralocorticoid response elements (MRE) and transactivates target genes. The effect of MC is to increase ion and water transport and thus raise extracellular fluid volume and blood pressure and lower potassium levels. The chain is Mineralocorticoid receptor (nr3c2) from Oncorhynchus mykiss (Rainbow trout).